Consider the following 371-residue polypeptide: uncharacterized protein (371 aa).

33 to 40 contacts ATP; it reads GPLNSGKT.

This sequence belongs to the archaeal ATPase family.

This is an uncharacterized protein from Methanocaldococcus jannaschii (strain ATCC 43067 / DSM 2661 / JAL-1 / JCM 10045 / NBRC 100440) (Methanococcus jannaschii).